A 26-amino-acid polypeptide reads, in one-letter code: Alpha-amylase inhibitor 1 (26 aa).

This sequence belongs to the protease inhibitor I6 (cereal trypsin/alpha-amylase inhibitor) family.

It localises to the secreted. Functionally, alpha-amylase inhibitor. This chain is Alpha-amylase inhibitor 1, found in Saussurea costus (Costus).